Reading from the N-terminus, the 509-residue chain is Maturase K (509 aa).

The protein belongs to the intron maturase 2 family. MatK subfamily.

It is found in the plastid. The protein resides in the chloroplast. In terms of biological role, usually encoded in the trnK tRNA gene intron. Probably assists in splicing its own and other chloroplast group II introns. This is Maturase K from Drimys granadensis.